We begin with the raw amino-acid sequence, 214 residues long: Thymidylate kinase (214 aa).

ATP is bound at residue 9 to 16 (GVDGSGKS).

It belongs to the thymidylate kinase family.

The catalysed reaction is dTMP + ATP = dTDP + ADP. In terms of biological role, phosphorylation of dTMP to form dTDP in both de novo and salvage pathways of dTTP synthesis. The chain is Thymidylate kinase from Symbiobacterium thermophilum (strain DSM 24528 / JCM 14929 / IAM 14863 / T).